A 444-amino-acid chain; its full sequence is Killer cell immunoglobulin-like receptor 3DL1 (444 aa).

The signal sequence occupies residues 1–21 (MSLMVVSMACVGLFLVQRAGP). The Extracellular portion of the chain corresponds to 22-340 (HMGGQDKPFL…SKSGNPRHLH (319 aa)). Ig-like C2-type domains are found at residues 42–102 (GGHV…HPHS), 137–202 (GERV…VTHT), and 237–300 (GESV…FRHS). Disulfide bonds link Cys-49-Cys-95, Cys-144-Cys-195, and Cys-244-Cys-293. N-linked (GlcNAc...) asparagine glycosylation is found at Asn-92, Asn-179, and Asn-273. The disordered stretch occupies residues 315-334 (VTGNPSSSWPSPTEPSSKSG). Over residues 319–333 (PSSSWPSPTEPSSKS) the composition is skewed to low complexity. The chain crosses the membrane as a helical span at residues 341–360 (ILIGTSVVIILFILLLFFLL). The Cytoplasmic portion of the chain corresponds to 361 to 444 (HLWCSNKKNA…KPRSKVVSCP (84 aa)). 2 disordered regions span residues 375–394 (QEPAGNRTANSEDSDEQDPE) and 409–444 (RKITRPSQRPKTPPTDTILYTELPNAKPRSKVVSCP).

Belongs to the immunoglobulin superfamily.

It is found in the cell membrane. Its function is as follows. Receptor on natural killer (NK) cells for HLA Bw4 allele. Inhibits the activity of NK cells thus preventing cell lysis. This Homo sapiens (Human) protein is Killer cell immunoglobulin-like receptor 3DL1.